The primary structure comprises 400 residues: Cytochrome P450 BJ-1 homolog (400 aa).

Cys-349 lines the heme pocket.

It belongs to the cytochrome P450 family. Heme serves as cofactor.

Cytochromes P450 are a group of heme-thiolate monooxygenases. They oxidize a variety of structurally unrelated compounds, including steroids, fatty acids, and xenobiotics. The polypeptide is Cytochrome P450 BJ-1 homolog (cyp112A2) (Sinorhizobium fredii (strain NBRC 101917 / NGR234)).